The chain runs to 902 residues: Cytosolic 10-formyltetrahydrofolate dehydrogenase (902 aa).

The segment at 1 to 310 is hydrolase domain; sequence MKIAVIGQSL…LASNFFKGAA (310 aa). Ser9 bears the Phosphoserine mark. Lys38 carries the N6-succinyllysine modification. Residue 88–90 participates in (6R)-10-formyltetrahydrofolate binding; it reads QFI. His106 functions as the Proton donor in the catalytic mechanism. Asp142 provides a ligand contact to (6R)-10-formyltetrahydrofolate. The Carrier domain maps to 318–395; it reads EAELVTAEAV…DFIQLLVRKL (78 aa). Ser354 carries the O-(pantetheine 4'-phosphoryl)serine modification. The aldehyde dehydrogenase domain stretch occupies residues 417 to 902; sequence TIRIPHQLFI…LRVKTVTFEY (486 aa). NADP(+) contacts are provided by residues 571-573 and 597-600; these read IPW and KPAQ. Phosphoserine is present on residues Ser629 and Ser631. Residues 630 to 635 and 650 to 651 contribute to the NADP(+) site; these read GSLVGQ and GS. The residue at position 660 (Lys660) is an N6-succinyllysine. Catalysis depends on Glu673, which acts as the Proton acceptor. 673 to 674 provides a ligand contact to NADP(+); it reads EL. The Proton donor role is filled by Cys707. Residue Lys757 participates in NADP(+) binding. Lys767 is subject to N6-succinyllysine. Position 804 to 806 (804 to 806) interacts with NADP(+); that stretch reads ESF. Ser825 bears the Phosphoserine mark. The residue at position 882 (Lys882) is an N6-acetyllysine.

The protein in the N-terminal section; belongs to the GART family. In the C-terminal section; belongs to the aldehyde dehydrogenase family. ALDH1L subfamily. Homotetramer. In terms of processing, phosphopantetheinylation at Ser-354 by AASDHPPT is required for the formyltetrahydrofolate dehydrogenase activity.

The protein localises to the cytoplasm. It is found in the cytosol. The catalysed reaction is (6R)-10-formyltetrahydrofolate + NADP(+) + H2O = (6S)-5,6,7,8-tetrahydrofolate + CO2 + NADPH + H(+). Its function is as follows. Cytosolic 10-formyltetrahydrofolate dehydrogenase that catalyzes the NADP(+)-dependent conversion of 10-formyltetrahydrofolate to tetrahydrofolate and carbon dioxide. May also have an NADP(+)-dependent aldehyde dehydrogenase activity towards formaldehyde, acetaldehyde, propionaldehyde, and benzaldehyde. The protein is Cytosolic 10-formyltetrahydrofolate dehydrogenase of Pongo abelii (Sumatran orangutan).